We begin with the raw amino-acid sequence, 221 residues long: MEIFLDTANIEEIRKGVAWGIVDGVTTNPTLVSKENAVFEERIKEICETVEGPVSAEVVSTDYEGMVKEAREIANLSEFVVVKIPLIPDGIKAIKTLSKEGIKTNATLVFSPLQALLAAKAGATYVSPFIGRMDDIGNTGMDIVEEIEVIFSNYGYETKIIVASVRHPQHVLEAGLIGADVVTMPFEVLEKMFKHPMTDIGLERFLNDWKKYQDYLKSKNN.

K83 acts as the Schiff-base intermediate with substrate in catalysis.

Belongs to the transaldolase family. Type 3B subfamily.

It localises to the cytoplasm. It carries out the reaction D-sedoheptulose 7-phosphate + D-glyceraldehyde 3-phosphate = D-erythrose 4-phosphate + beta-D-fructose 6-phosphate. It participates in carbohydrate degradation; pentose phosphate pathway; D-glyceraldehyde 3-phosphate and beta-D-fructose 6-phosphate from D-ribose 5-phosphate and D-xylulose 5-phosphate (non-oxidative stage): step 2/3. Transaldolase is important for the balance of metabolites in the pentose-phosphate pathway. The chain is Probable transaldolase from Petrotoga mobilis (strain DSM 10674 / SJ95).